The sequence spans 177 residues: Protein GrpE (177 aa).

This sequence belongs to the GrpE family. Homodimer. Requires K(+) as cofactor.

Its subcellular location is the cytoplasm. Its function is as follows. Participates actively in the response to hyperosmotic and heat shock by preventing the aggregation of stress-denatured proteins, in association with DnaK and GrpE. It is the nucleotide exchange factor for DnaK and may function as a thermosensor. Unfolded proteins bind initially to DnaJ; upon interaction with the DnaJ-bound protein, DnaK hydrolyzes its bound ATP, resulting in the formation of a stable complex. GrpE releases ADP from DnaK; ATP binding to DnaK triggers the release of the substrate protein, thus completing the reaction cycle. Several rounds of ATP-dependent interactions between DnaJ, DnaK and GrpE are required for fully efficient folding. This chain is Protein GrpE, found in Thermus thermophilus (strain ATCC 27634 / DSM 579 / HB8).